A 963-amino-acid polypeptide reads, in one-letter code: Spliceosome associated factor 3, U4/U6 recycling protein (963 aa).

A compositionally biased stretch (low complexity) spans 1 to 11; it reads MATAAETSASE. Disordered regions lie at residues 1–36 and 50–90; these read MATAAETSASEPEAESKAGPKADGEEDEVKAARTRR and TMGP…YDEE. Ala-2 is modified (N-acetylalanine). The segment at 2 to 351 is mediates interaction with PRPF3; sequence ATAAETSASE…LVPDLWIRYS (350 aa). Phosphoserine is present on residues Ser-10 and Ser-16. Over residues 14–23 the composition is skewed to basic and acidic residues; the sequence is AESKAGPKAD. The stretch at 21–46 forms a coiled coil; sequence KADGEEDEVKAARTRRKVLSRAVAAA. Residues 57–69 are compositionally biased toward acidic residues; sequence QQEEGVSESDGDE. Positions 82 to 110 form a coiled coil; it reads EYEWEYDEEEEKNQLEIERLEEQLSINVY. HAT repeat units follow at residues 126–158, 164–195, 201–237, 242–275, 324–356, 359–391, 394–430, and 487–520; these read GELTKVRMARQKMSEIFPLTEELWLEWLHDEIS, LDREHVYDLFEKAVKDYICPNIWLEYGQYSVG, GGLEKVRSVFERALSSVGLHMTKGLALWEAYREFESA, ARLEKVHSLFRRQLAIPLYDMEATFAEYEEWSED, GDPARIQLIFERALVENCLVPDLWIRYSQYLDR, KVKDLVLSVHNRAIRNCPWTVALWSRYLLAMER, VDHQVISVTFEKALNAGFIQATDYVEIWQAYLDYLRR, and NNMQKARELWDSIMTRGNAKYANMWLEYYNLERA. At Ser-215 the chain carries Phosphoserine. Positions 487–520 are required for interaction with USP4; that stretch reads NNMQKARELWDSIMTRGNAKYANMWLEYYNLERA. Positions 537–953 are necessary and sufficient for U6 snRNA binding; the sequence is CTSDYPEHVC…AATEAPKMSN (417 aa). Positions 559-619 form a coiled coil; the sequence is LEDWDIAVQK…ALKKKKKIRG (61 aa). The span at 590 to 601 shows a compositional bias: basic and acidic residues; the sequence is LVQQEEEKAEQR. The disordered stretch occupies residues 590 to 694; sequence LVQQEEEKAE…AASLKRDMPK (105 aa). Residues 600–670 are required for nuclear localization; it reads QRKRARAEKK…EVAAGPAGKC (71 aa). The Nuclear localization signal signature appears at 601–608; sequence RKRARAEK. A compositionally biased stretch (basic residues) spans 602–617; sequence KRARAEKKALKKKKKI. The span at 626-639 shows a compositional bias: acidic residues; it reads DEDDEKEWGDDEEE. Residue Ser-650 is modified to Phosphoserine. Position 657 is a phosphothreonine (Thr-657). Over residues 677–694 the composition is skewed to basic and acidic residues; the sequence is PPSKQKEKAASLKRDMPK. The region spanning 704 to 782 is the RRM 1 domain; it reads ITVFVSNLPY…RPMFVSPCVD (79 aa). Ser-769, Ser-795, and Ser-852 each carry phosphoserine. The 78-residue stretch at 801-878 folds into the RRM 2 domain; the sequence is HKLFISGLPF…NIIKVAISNP (78 aa). Residues 878–898 form a disordered region; it reads PPQRKVPEKPETRKAPGGPML. Over residues 882–891 the composition is skewed to basic and acidic residues; it reads KVPEKPETRK. The residue at position 906 (Arg-906) is an Omega-N-methylarginine. A disordered region spans residues 920–948; it reads LQRPSAAAPQAENGPAAAPAVAAPAATEA. Low complexity predominate over residues 925 to 948; sequence AAAPQAENGPAAAPAVAAPAATEA.

In terms of assembly, component of the 7SK snRNP complex at least composed of P-TEFb (composed of CDK9 and CCNT1/cyclin-T1), HEXIM1, HEXIM2, BCDIN3, SART3 proteins and 7SK and U6 snRNAs. Interacts with AGO1 and AGO2. Interacts with PRPF3 and USP4; the interaction with PRPF3 is direct and recruits USP4 to its substrate PRPF3. Interacts with USP15; the interaction is direct. Interacts with HIV-1 Tat. As to expression, ubiquitously expressed.

The protein resides in the nucleus. It is found in the nucleoplasm. Its subcellular location is the cajal body. The protein localises to the nucleus speckle. It localises to the cytoplasm. U6 snRNP-binding protein that functions as a recycling factor of the splicing machinery. Promotes the initial reassembly of U4 and U6 snRNPs following their ejection from the spliceosome during its maturation. Also binds U6atac snRNPs and may function as a recycling factor for U4atac/U6atac spliceosomal snRNP, an initial step in the assembly of U12-type spliceosomal complex. The U12-type spliceosomal complex plays a role in the splicing of introns with non-canonical splice sites. May also function as a substrate-targeting factor for deubiquitinases like USP4 and USP15. Recruits USP4 to ubiquitinated PRPF3 within the U4/U5/U6 tri-snRNP complex, promoting PRPF3 deubiquitination and thereby regulating the spliceosome U4/U5/U6 tri-snRNP spliceosomal complex disassembly. May also recruit the deubiquitinase USP15 to histone H2B and mediate histone deubiquitination, thereby regulating gene expression and/or DNA repair. May play a role in hematopoiesis probably through transcription regulation of specific genes including MYC. In terms of biological role, regulates Tat transactivation activity through direct interaction. May be a cellular factor for HIV-1 gene expression and viral replication. The chain is Spliceosome associated factor 3, U4/U6 recycling protein from Homo sapiens (Human).